A 547-amino-acid polypeptide reads, in one-letter code: MPSMRVTTDTWPRRAAQEPLLLLLLRSSLMKSASLQALNPNRAMAAMGRSVRVVLDSSVLLDPSGVTAEEEEVVVALRPGAEALLRRLRYSNLRVAICHPEGLTTNESGFLEKTAKLYSFGYMPLTSPSGSNLLNELMLEWSETNFCFYVTSGVHEGLLSELQNHNWEVIAMGNEDVIKNSGVIHISMLQELLITLATSIKKEIGNSSAFVVGYVMKQSREEDFAKRGAFPIYPSKNDLIFVPLSFELPLASQLQEVDLVLHKITDEIINIDPNSSISFPKGISFSPGMSEIIRFVEEHCDFCVIDPFKNIYPLLDRIQIQEILIRLEGLSAEGRPKLRAPCFLKIESFCGSELQKQLAEAKLSFPLIVKPQVACGVADAHNMALIFKIEEFSNLSVPLPAILQEYIDHGSKIFKFYAIGDKIFHAIKNSMPNASHLKSSSGGKPLTFNSLKTLPVATKEQLLQNEVQDSKLLDINLVEEAAKLLKELLGLTIFGFDVVVQESSGDHVIVDLNYLPSFKEVPDNVAMPAFWDAIKQSYESRKQMTQT.

K263 contacts 1D-myo-inositol 1,3,4-trisphosphate. ATP contacts are provided by R317 and K370. The ATP-grasp domain occupies 327-539; it reads LEGLSAEGRP…FWDAIKQSYE (213 aa). The 1D-myo-inositol 1,3,4-trisphosphate site is built by H381 and K415. ATP is bound by residues 404 to 415, S430, and S450; that span reads QEYIDHGSKIFK. Mg(2+) contacts are provided by D497, D511, and N513. 2 residues coordinate 1D-myo-inositol 1,3,4-trisphosphate: N513 and S517.

Belongs to the ITPK1 family. In terms of assembly, monomer. Requires Mg(2+) as cofactor.

It carries out the reaction 1D-myo-inositol 3,4,5,6-tetrakisphosphate + ATP = 1D-myo-inositol 1,3,4,5,6-pentakisphosphate + ADP + H(+). It catalyses the reaction 1D-myo-inositol 1,3,4-trisphosphate + ATP = 1D-myo-inositol 1,3,4,5-tetrakisphosphate + ADP + H(+). The catalysed reaction is 1D-myo-inositol 1,3,4-trisphosphate + ATP = 1D-myo-inositol 1,3,4,6-tetrakisphosphate + ADP + H(+). Functionally, kinase that can phosphorylate various inositol polyphosphate such as Ins(3,4,5,6)P4 or Ins(1,3,4)P3 and participates in phytic acid biosynthesis in developing seeds. Phytic acid is the primary storage form of phosphorus in cereal grains and other plant seeds. This Oryza sativa subsp. indica (Rice) protein is Inositol-tetrakisphosphate 1-kinase 6.